We begin with the raw amino-acid sequence, 186 residues long: Ribosome-recycling factor (186 aa).

This sequence belongs to the RRF family.

It is found in the cytoplasm. In terms of biological role, responsible for the release of ribosomes from messenger RNA at the termination of protein biosynthesis. May increase the efficiency of translation by recycling ribosomes from one round of translation to another. The sequence is that of Ribosome-recycling factor from Polaromonas sp. (strain JS666 / ATCC BAA-500).